A 394-amino-acid polypeptide reads, in one-letter code: Elongation factor Tu 1 (394 aa).

A tr-type G domain is found at 10–204; that stretch reads KPHVNVGTIG…ALDSYIPEPQ (195 aa). The interval 19–26 is G1; sequence GHVDHGKT. 19-26 provides a ligand contact to GTP; sequence GHVDHGKT. Threonine 26 is a binding site for Mg(2+). The G2 stretch occupies residues 60–64; sequence GITIN. The interval 81-84 is G3; the sequence is DCPG. GTP-binding positions include 81-85 and 136-139; these read DCPGH and NKCD. The segment at 136-139 is G4; that stretch reads NKCD. The interval 174 to 176 is G5; that stretch reads SAL.

It belongs to the TRAFAC class translation factor GTPase superfamily. Classic translation factor GTPase family. EF-Tu/EF-1A subfamily. Monomer.

It localises to the cytoplasm. It carries out the reaction GTP + H2O = GDP + phosphate + H(+). Functionally, GTP hydrolase that promotes the GTP-dependent binding of aminoacyl-tRNA to the A-site of ribosomes during protein biosynthesis. This Shewanella baltica (strain OS195) protein is Elongation factor Tu 1.